We begin with the raw amino-acid sequence, 127 residues long: Fluoride-specific ion channel FluC (127 aa).

The next 4 helical transmembrane spans lie at 4–24 (LLLAVFIGGGTGSVARWLLSM), 35–55 (LGTLTANLIGAFIIGIGFAWF), 71–91 (TGFCGGLTTFSTFSAEVVFLL), and 103–123 (VFVNLLGSFAMTALAFWLFSA). Positions 75 and 78 each coordinate Na(+).

It belongs to the fluoride channel Fluc/FEX (TC 1.A.43) family.

Its subcellular location is the cell inner membrane. The enzyme catalyses fluoride(in) = fluoride(out). Na(+) is not transported, but it plays an essential structural role and its presence is essential for fluoride channel function. In terms of biological role, fluoride-specific ion channel. Important for reducing fluoride concentration in the cell, thus reducing its toxicity. This is Fluoride-specific ion channel FluC from Escherichia coli (strain K12 / MC4100 / BW2952).